Here is a 42-residue protein sequence, read N- to C-terminus: Potassium channel toxin gamma-KTx 1.4 (42 aa).

4 cysteine pairs are disulfide-bonded: cysteine 5-cysteine 23, cysteine 11-cysteine 34, cysteine 20-cysteine 39, and cysteine 24-cysteine 41.

This sequence belongs to the ergtoxin family. Gamma-KTx 1 subfamily. Expressed by the venom gland.

It is found in the secreted. Its function is as follows. Blocks Kv11/ERG potassium channels. This chain is Potassium channel toxin gamma-KTx 1.4, found in Centruroides sculpturatus (Arizona bark scorpion).